We begin with the raw amino-acid sequence, 338 residues long: Eukaryotic translation initiation factor 3 subunit H (338 aa).

One can recognise an MPN domain in the interval 22 to 154 (VQCDGLAVMK…LKAYRLTPQA (133 aa)).

The protein belongs to the eIF-3 subunit H family. In terms of assembly, component of the eukaryotic translation initiation factor 3 (eIF-3) complex. The eIF-3 complex interacts with pix. Interacts with mxt.

Its subcellular location is the cytoplasm. In terms of biological role, component of the eukaryotic translation initiation factor 3 (eIF-3) complex, which is involved in protein synthesis of a specialized repertoire of mRNAs and, together with other initiation factors, stimulates binding of mRNA and methionyl-tRNAi to the 40S ribosome. The eIF-3 complex specifically targets and initiates translation of a subset of mRNAs involved in cell proliferation. This Drosophila erecta (Fruit fly) protein is Eukaryotic translation initiation factor 3 subunit H.